Consider the following 219-residue polypeptide: NAD(P)H-quinone oxidoreductase subunit I (219 aa).

4Fe-4S ferredoxin-type domains are found at residues 55 to 84 (GRIH…VDWV) and 95 to 124 (RNYS…MTEE). [4Fe-4S] cluster contacts are provided by C64, C67, C70, C74, C104, C107, C110, and C114.

This sequence belongs to the complex I 23 kDa subunit family. In terms of assembly, NDH-1 is composed of at least 11 different subunits. The cofactor is [4Fe-4S] cluster.

It localises to the cellular thylakoid membrane. The catalysed reaction is a plastoquinone + NADH + (n+1) H(+)(in) = a plastoquinol + NAD(+) + n H(+)(out). It carries out the reaction a plastoquinone + NADPH + (n+1) H(+)(in) = a plastoquinol + NADP(+) + n H(+)(out). NDH-1 shuttles electrons from an unknown electron donor, via FMN and iron-sulfur (Fe-S) centers, to quinones in the respiratory and/or the photosynthetic chain. The immediate electron acceptor for the enzyme in this species is believed to be plastoquinone. Couples the redox reaction to proton translocation, and thus conserves the redox energy in a proton gradient. This is NAD(P)H-quinone oxidoreductase subunit I from Prochlorococcus marinus (strain SARG / CCMP1375 / SS120).